The following is a 160-amino-acid chain: Phosphopantetheine adenylyltransferase (160 aa).

Serine 10 contributes to the substrate binding site. ATP-binding positions include 10 to 11 (SF) and histidine 18. Residues lysine 42, leucine 74, and arginine 88 each contribute to the substrate site. ATP contacts are provided by residues 89-91 (GLR), glutamate 99, and 124-130 (YSFLSSS).

The protein belongs to the bacterial CoaD family. In terms of assembly, homohexamer. The cofactor is Mg(2+).

It localises to the cytoplasm. The catalysed reaction is (R)-4'-phosphopantetheine + ATP + H(+) = 3'-dephospho-CoA + diphosphate. The protein operates within cofactor biosynthesis; coenzyme A biosynthesis; CoA from (R)-pantothenate: step 4/5. Reversibly transfers an adenylyl group from ATP to 4'-phosphopantetheine, yielding dephospho-CoA (dPCoA) and pyrophosphate. This chain is Phosphopantetheine adenylyltransferase, found in Bacillus velezensis (strain DSM 23117 / BGSC 10A6 / LMG 26770 / FZB42) (Bacillus amyloliquefaciens subsp. plantarum).